The primary structure comprises 289 residues: BTB/POZ domain-containing protein KCTD7 (289 aa).

The segment at 1–42 (MVVVTGREPDSRHSDGAMSSSEAEDDFLEPATPTATQAGHGL) is disordered. The region spanning 53 to 141 (VPLNIGGAHF…YAIGPLLEQL (89 aa)) is the BTB domain.

As to quaternary structure, interacts with CUL3. As to expression, high expression in brain, particularly in post-mitotic neurons. Expressed in the mitral cells of the olfactory bulbs, the hippocampus, the deep layers of the cerebral cortex and Purkinje cells of the cerebellum. Not detected in astrocytes or microglial cells. Also expressed in heart, liver, spleen and kidney.

The protein resides in the cell membrane. The protein localises to the cytoplasm. It is found in the cytosol. May be involved in the control of excitability of cortical neurons. The polypeptide is BTB/POZ domain-containing protein KCTD7 (Kctd7) (Mus musculus (Mouse)).